The sequence spans 124 residues: Small ribosomal subunit protein uS12 (124 aa).

Residue D89 is modified to 3-methylthioaspartic acid. Positions 105–124 (QGVKNRKQARSKYGAKMEKK) are disordered.

The protein belongs to the universal ribosomal protein uS12 family. Part of the 30S ribosomal subunit. Contacts proteins S8 and S17. May interact with IF1 in the 30S initiation complex.

Its function is as follows. With S4 and S5 plays an important role in translational accuracy. In terms of biological role, interacts with and stabilizes bases of the 16S rRNA that are involved in tRNA selection in the A site and with the mRNA backbone. Located at the interface of the 30S and 50S subunits, it traverses the body of the 30S subunit contacting proteins on the other side and probably holding the rRNA structure together. The combined cluster of proteins S8, S12 and S17 appears to hold together the shoulder and platform of the 30S subunit. This is Small ribosomal subunit protein uS12 from Renibacterium salmoninarum (strain ATCC 33209 / DSM 20767 / JCM 11484 / NBRC 15589 / NCIMB 2235).